Here is a 644-residue protein sequence, read N- to C-terminus: Core protein VP4 (644 aa).

It belongs to the orbivirus VP4 family.

The protein resides in the virion. Functionally, the VP4 protein is one of the five proteins (with VP1, VP3, VP6 and VP7) which form the inner capsid of the virus. The polypeptide is Core protein VP4 (Segment-4) (Bluetongue virus 13 (isolate USA) (BTV 13)).